The following is a 472-amino-acid chain: Interferon-induced protein with tetratricopeptide repeats 2 (472 aa).

An N-acetylserine modification is found at Ser2. TPR repeat units follow at residues Ala51 to Val89, Glu90 to Asn135, Pro136 to Asn171, Pro172 to Asn208, Ile244 to Asn277, Ala278 to Tyr333, Ser334 to Pro364, Pro365 to Thr403, and Ile404 to Gln445. Positions Gly441–Tyr472 are disordered.

This sequence belongs to the IFIT family. In terms of assembly, domain-swapped homodimer. Component of an interferon-dependent multiprotein complex, at least composed of IFIT1, IFIT2 and IFIT3. Interacts with IFIT1 and IFIT3. Interacts with STING1/MITA and disrupts its interaction with MAVS or TBK1. Interacts with EIF3C.

The protein resides in the cytoplasm. Its subcellular location is the endoplasmic reticulum. In terms of biological role, IFN-induced antiviral protein which inhibits expression of viral messenger RNAs lacking 2'-O-methylation of the 5' cap. The ribose 2'-O-methylation would provide a molecular signature to distinguish between self and non-self mRNAs by the host during viral infection. Viruses evolved several ways to evade this restriction system such as encoding their own 2'-O-methylase for their mRNAs or by stealing host cap containing the 2'-O-methylation (cap snatching mechanism). Binds AU-rich viral RNAs, with or without 5' triphosphorylation, RNA-binding is required for antiviral activity. Can promote apoptosis. The protein is Interferon-induced protein with tetratricopeptide repeats 2 (Ifit2) of Mus musculus (Mouse).